We begin with the raw amino-acid sequence, 179 residues long: Large ribosomal subunit protein uL5 (179 aa).

It belongs to the universal ribosomal protein uL5 family. As to quaternary structure, part of the 50S ribosomal subunit; part of the 5S rRNA/L5/L18/L25 subcomplex. Contacts the 5S rRNA and the P site tRNA. Forms a bridge to the 30S subunit in the 70S ribosome.

Functionally, this is one of the proteins that bind and probably mediate the attachment of the 5S RNA into the large ribosomal subunit, where it forms part of the central protuberance. In the 70S ribosome it contacts protein S13 of the 30S subunit (bridge B1b), connecting the 2 subunits; this bridge is implicated in subunit movement. Contacts the P site tRNA; the 5S rRNA and some of its associated proteins might help stabilize positioning of ribosome-bound tRNAs. The protein is Large ribosomal subunit protein uL5 of Variovorax paradoxus (strain S110).